Reading from the N-terminus, the 232-residue chain is Phycobilisome rod-core linker polypeptide cpcG (232 aa).

In terms of domain architecture, PBS-linker spans 11-191 (STQNQRVDGY…PRYGADFKEK (181 aa)).

Belongs to the phycobilisome linker protein family. In terms of assembly, the phycobilisome is a hemidiscoidal structure that is composed of two distinct substructures: a core complex and a number of rods radiating from the core.

Its subcellular location is the plastid. It localises to the chloroplast. The protein resides in the chloroplast thylakoid membrane. Its function is as follows. Rod-core linker protein required for attachment of phycocyanin to allophycocyanin in cores of phycobilisomes. In terms of biological role, linker polypeptides determine the state of aggregation and the location of the disk-shaped phycobiliprotein units within the phycobilisome and modulate their spectroscopic properties in order to mediate a directed and optimal energy transfer. In Pyropia yezoensis (Susabi-nori), this protein is Phycobilisome rod-core linker polypeptide cpcG (cpcG).